We begin with the raw amino-acid sequence, 411 residues long: MWIQQLLGLSSMPIRWPGRSLGSHLWILIAMLQLAVDFPSCDSLGPGPEFRLLSRPQRPQRLWSLRTGPPTRLPTPAWSPRAARAERAHGPIQMQTPRARRAHRPRDQVATLGPKGGLTKPPAATRSSPSLTSASASSSMTAGAAEHQSLLKRGRRHTHDAEFNDFDFHGGRPTTETEFIAWGPTGDEEALESNTFPGGFGPTTVSILQTRKTTMAATTTTTAASTATAMTLQTKGVTESLDPWKRTPVGVSTTEPSTSPSNNGKDIQPPRILGETSGLAVHQIITITVSLIMVIAALITTLVLKNCCAPSGHTRRNSHQRKMNQQEESCQNLTDFTPARVPSSVDIFTAYNETLQCSHECVRASVPVYADETLHSTGEYKSTFNGNRSSSADRHLIPVAFVSEKWFEISC.

Positions 1–43 (MWIQQLLGLSSMPIRWPGRSLGSHLWILIAMLQLAVDFPSCDS) are cleaved as a signal peptide. Residues 44 to 283 (LGPGPEFRLL…GETSGLAVHQ (240 aa)) are Extracellular-facing. 3 stretches are compositionally biased toward low complexity: residues 62–76 (LWSLRTGPPTRLPTP), 121–145 (PPAATRSSPSLTSASASSSMTAGAA), and 247–264 (TPVGVSTTEPSTSPSNNG). 2 disordered regions span residues 62 to 156 (LWSL…RGRR) and 242 to 270 (DPWKRTPVGVSTTEPSTSPSNNGKDIQPP). A helical transmembrane segment spans residues 284 to 304 (IITITVSLIMVIAALITTLVL). Positions 304-411 (LKNCCAPSGH…VSEKWFEISC (108 aa)) are targeting signals. At 305-411 (KNCCAPSGHT…VSEKWFEISC (107 aa)) the chain is on the cytoplasmic side.

Forms a complex with CDH1 and CTNNB1; interacts directly with CTNNB1. Interacts with AP1M2 and with isoform 2 of BSG/CD147.

It localises to the basolateral cell membrane. The protein localises to the apical cell membrane. The protein resides in the cell junction. Its subcellular location is the adherens junction. Its function is as follows. Plays a role in cell adhesion and cell migration. The chain is Adherens junction-associated protein 1 (Ajap1) from Rattus norvegicus (Rat).